Consider the following 406-residue polypeptide: MTFSVDKVRADFPVLSREVNGLPLAYLDSAASAQKPSQVIDAEAEFYRHGYAAVHRGIHTLSAQATEKMENVRKRASLFINARSAEELVFVRGTTEGINLVANSWGNSNVRAGDNIIISQMEHHANIVPWQMLCARVGAELRVIPLNPDGTLQLETLPTLFDEKTRLLAITHVSNVLGTENPLAEMITLAHQHGAKVLVDGAQAVMHHPVDVQALDCDFYVFSGHKLYGPTGIGILYVKEALLQEMPPWEGGGSMIATVSLSEGTTWTKAPWRFEAGTPNTGGIIGLGAALEYVSALGLNSIAEYEQNLMHYALSQLESVPDLTLYGQQNRLGVIAFNLGKHHAYDVGSFLDNYGIAVRTGHHCAMPLMAYYNVPAMCRASLAMYNTHEEVERLVTGLQRIHRLLG.

K226 is subject to N6-(pyridoxal phosphate)lysine. The Cysteine persulfide intermediate role is filled by C364.

It belongs to the class-V pyridoxal-phosphate-dependent aminotransferase family. Csd subfamily. As to quaternary structure, homodimer. Interacts with SufE and the SufBCD complex composed of SufB, SufC and SufD. The interaction with SufE is required to mediate the direct transfer of the sulfur atom from the S-sulfanylcysteine. Pyridoxal 5'-phosphate serves as cofactor.

Its subcellular location is the cytoplasm. It carries out the reaction (sulfur carrier)-H + L-cysteine = (sulfur carrier)-SH + L-alanine. The catalysed reaction is L-selenocysteine + AH2 = hydrogenselenide + L-alanine + A + H(+). It participates in cofactor biosynthesis; iron-sulfur cluster biosynthesis. Functionally, cysteine desulfurases mobilize the sulfur from L-cysteine to yield L-alanine, an essential step in sulfur metabolism for biosynthesis of a variety of sulfur-containing biomolecules. Component of the suf operon, which is activated and required under specific conditions such as oxidative stress and iron limitation. Acts as a potent selenocysteine lyase in vitro, that mobilizes selenium from L-selenocysteine. Selenocysteine lyase activity is however unsure in vivo. The sequence is that of Cysteine desulfurase (sufS) from Shigella flexneri.